Consider the following 548-residue polypeptide: Chaperonin GroEL (548 aa).

ATP is bound by residues 30 to 33, Lys51, 87 to 91, Gly415, 479 to 481, and Asp495; these read TLGP, DGTTT, and NAA.

The protein belongs to the chaperonin (HSP60) family. As to quaternary structure, forms a cylinder of 14 subunits composed of two heptameric rings stacked back-to-back. Interacts with the co-chaperonin GroES.

It localises to the cytoplasm. It carries out the reaction ATP + H2O + a folded polypeptide = ADP + phosphate + an unfolded polypeptide.. In terms of biological role, together with its co-chaperonin GroES, plays an essential role in assisting protein folding. The GroEL-GroES system forms a nano-cage that allows encapsulation of the non-native substrate proteins and provides a physical environment optimized to promote and accelerate protein folding. In Oleidesulfovibrio alaskensis (strain ATCC BAA-1058 / DSM 17464 / G20) (Desulfovibrio alaskensis), this protein is Chaperonin GroEL.